The primary structure comprises 288 residues: Polyamine aminopropyltransferase (288 aa).

A PABS domain is found at 9–238 (ETLHDQFGQY…GIMTFAWATD (230 aa)). S-methyl-5'-thioadenosine is bound at residue Gln33. His64 and Asp88 together coordinate spermidine. S-methyl-5'-thioadenosine contacts are provided by residues Glu108 and 140–141 (DG). Asp158 acts as the Proton acceptor in catalysis. Residue 158–161 (DCTD) participates in spermidine binding. Pro165 lines the S-methyl-5'-thioadenosine pocket.

Belongs to the spermidine/spermine synthase family. In terms of assembly, homodimer or homotetramer.

The protein localises to the cytoplasm. The catalysed reaction is S-adenosyl 3-(methylsulfanyl)propylamine + putrescine = S-methyl-5'-thioadenosine + spermidine + H(+). The protein operates within amine and polyamine biosynthesis; spermidine biosynthesis; spermidine from putrescine: step 1/1. Its function is as follows. Catalyzes the irreversible transfer of a propylamine group from the amino donor S-adenosylmethioninamine (decarboxy-AdoMet) to putrescine (1,4-diaminobutane) to yield spermidine. The polypeptide is Polyamine aminopropyltransferase (Escherichia fergusonii (strain ATCC 35469 / DSM 13698 / CCUG 18766 / IAM 14443 / JCM 21226 / LMG 7866 / NBRC 102419 / NCTC 12128 / CDC 0568-73)).